Here is a 136-residue protein sequence, read N- to C-terminus: 6,7-dimethyl-8-ribityllumazine synthase (136 aa).

5-amino-6-(D-ribitylamino)uracil-binding positions include Phe-11, 43-45, and 67-69; these read VYD and CVI. (2S)-2-hydroxy-3-oxobutyl phosphate is bound at residue 72 to 73; that stretch reads DT. His-75 (proton donor) is an active-site residue. 5-amino-6-(D-ribitylamino)uracil is bound at residue Leu-100. Residue Arg-115 coordinates (2S)-2-hydroxy-3-oxobutyl phosphate.

Belongs to the DMRL synthase family. Forms an icosahedral capsid composed of 60 subunits, arranged as a dodecamer of pentamers.

It catalyses the reaction (2S)-2-hydroxy-3-oxobutyl phosphate + 5-amino-6-(D-ribitylamino)uracil = 6,7-dimethyl-8-(1-D-ribityl)lumazine + phosphate + 2 H2O + H(+). It functions in the pathway cofactor biosynthesis; riboflavin biosynthesis; riboflavin from 2-hydroxy-3-oxobutyl phosphate and 5-amino-6-(D-ribitylamino)uracil: step 1/2. Catalyzes the formation of 6,7-dimethyl-8-ribityllumazine by condensation of 5-amino-6-(D-ribitylamino)uracil with 3,4-dihydroxy-2-butanone 4-phosphate. This is the penultimate step in the biosynthesis of riboflavin. The chain is 6,7-dimethyl-8-ribityllumazine synthase from Methanococcus aeolicus (strain ATCC BAA-1280 / DSM 17508 / OCM 812 / Nankai-3).